Reading from the N-terminus, the 121-residue chain is UPF0344 protein BCG9842_B4136 (121 aa).

The next 4 helical transmembrane spans lie at isoleucine 6–glycine 26, leucine 38–alanine 58, tryptophan 65–valine 85, and proline 92–leucine 112.

Belongs to the UPF0344 family.

It is found in the cell membrane. The protein is UPF0344 protein BCG9842_B4136 of Bacillus cereus (strain G9842).